A 219-amino-acid chain; its full sequence is uncharacterized protein (219 aa).

Composition is skewed to basic and acidic residues over residues 1–20, 30–39, and 156–170; these read METPIEREIRRSCEREESLR, AGRELVELRV, and QEVRAVREREQELQR. The interval 1-195 is disordered; it reads METPIEREIR…PSLTASRGDG (195 aa).

The protein belongs to the MISP family.

This is an uncharacterized protein from Homo sapiens (Human).